Here is a 442-residue protein sequence, read N- to C-terminus: C4-dicarboxylate transport protein 4 (442 aa).

The next 6 membrane-spanning stretches (helical) occupy residues 20 to 40 (ILYVQVLIAIVLGVLIGYFYP), 53 to 73 (FIALIKMMIAPVIFCTVVHGI), 90 to 110 (LIYFESVSTVALAVGLLVGEV), 160 to 180 (GDLLQVLLISILSGFAIAFLG), 209 to 229 (PVGAFGAMAFTVGAYGLGSLL), and 233 to 253 (ALIGTFYLTSILFVLIVLGAI).

Belongs to the dicarboxylate/amino acid:cation symporter (DAACS) (TC 2.A.23) family.

The protein localises to the cell inner membrane. Its function is as follows. Responsible for the transport of dicarboxylates such as succinate, fumarate, and malate from the periplasm across the membrane. This chain is C4-dicarboxylate transport protein 4, found in Bradyrhizobium diazoefficiens (strain JCM 10833 / BCRC 13528 / IAM 13628 / NBRC 14792 / USDA 110).